We begin with the raw amino-acid sequence, 291 residues long: 4-hydroxy-tetrahydrodipicolinate synthase (291 aa).

Thr45 is a binding site for pyruvate. The active-site Proton donor/acceptor is Tyr133. Lys161 serves as the catalytic Schiff-base intermediate with substrate. Ile203 serves as a coordination point for pyruvate.

This sequence belongs to the DapA family. Homotetramer; dimer of dimers.

The protein resides in the cytoplasm. It catalyses the reaction L-aspartate 4-semialdehyde + pyruvate = (2S,4S)-4-hydroxy-2,3,4,5-tetrahydrodipicolinate + H2O + H(+). The protein operates within amino-acid biosynthesis; L-lysine biosynthesis via DAP pathway; (S)-tetrahydrodipicolinate from L-aspartate: step 3/4. Catalyzes the condensation of (S)-aspartate-beta-semialdehyde [(S)-ASA] and pyruvate to 4-hydroxy-tetrahydrodipicolinate (HTPA). This Saccharophagus degradans (strain 2-40 / ATCC 43961 / DSM 17024) protein is 4-hydroxy-tetrahydrodipicolinate synthase.